We begin with the raw amino-acid sequence, 261 residues long: tRNA pseudouridine synthase A (261 aa).

Asp51 serves as the catalytic Nucleophile. Residue Tyr109 coordinates substrate.

Belongs to the tRNA pseudouridine synthase TruA family. Homodimer.

It catalyses the reaction uridine(38/39/40) in tRNA = pseudouridine(38/39/40) in tRNA. In terms of biological role, formation of pseudouridine at positions 38, 39 and 40 in the anticodon stem and loop of transfer RNAs. In Shewanella sp. (strain MR-7), this protein is tRNA pseudouridine synthase A.